Here is a 217-residue protein sequence, read N- to C-terminus: Uracil-DNA glycosylase (217 aa).

Residue aspartate 62 is the Proton acceptor of the active site.

The protein belongs to the uracil-DNA glycosylase (UDG) superfamily. UNG family.

The protein resides in the cytoplasm. The enzyme catalyses Hydrolyzes single-stranded DNA or mismatched double-stranded DNA and polynucleotides, releasing free uracil.. Excises uracil residues from the DNA which can arise as a result of misincorporation of dUMP residues by DNA polymerase or due to deamination of cytosine. The protein is Uracil-DNA glycosylase of Streptococcus pyogenes serotype M6 (strain ATCC BAA-946 / MGAS10394).